The following is a 465-amino-acid chain: Asparagine--tRNA ligase (465 aa).

This sequence belongs to the class-II aminoacyl-tRNA synthetase family. As to quaternary structure, homodimer.

The protein resides in the cytoplasm. The enzyme catalyses tRNA(Asn) + L-asparagine + ATP = L-asparaginyl-tRNA(Asn) + AMP + diphosphate + H(+). In Pseudoalteromonas translucida (strain TAC 125), this protein is Asparagine--tRNA ligase.